Reading from the N-terminus, the 350-residue chain is MANKSLEIRFLFPLVLFLVVKLLCVDGKGFNNNGHKIRKGRWEGKLKMNFYHNSCPGAEDIVRQIVWKKVEANRSLAPKLLRVHYHDCFVRGCDASLLLDSVAGKAVSEKEARPNLSLSGFEIIDEIKYILEKRCPNTVSCADILTLAARDAVSYEFERPLWNVFTGRVDGRVSLATEAARDLPSAGANFTTLQKLFAESDLDVVDLVALSGAHTIGIAHCGVFGRRLLNFTGKGDTDPSLNPSYASFLKSECSDKSLRLNPSAVVGMDPTGPLAFDSGYFVSLLKNKGLFTSDAALLTDPSAAHIASVFQNSGAFLAQFGRSMIKMSSIKVLTLGDQGGEIRKNCRLVN.

An N-terminal signal peptide occupies residues 1–27 (MANKSLEIRFLFPLVLFLVVKLLCVDG). Intrachain disulfides connect cysteine 55–cysteine 135, cysteine 88–cysteine 93, cysteine 141–cysteine 346, and cysteine 221–cysteine 253. A glycan (N-linked (GlcNAc...) asparagine) is linked at asparagine 73. The active-site Proton acceptor is the histidine 86. The Ca(2+) site is built by aspartate 87, valine 90, glycine 92, aspartate 94, and serine 96. Proline 184 is a substrate binding site. Asparagine 189 is a glycosylation site (N-linked (GlcNAc...) asparagine). Heme b is bound at residue histidine 214. Threonine 215 contacts Ca(2+). Residue asparagine 230 is glycosylated (N-linked (GlcNAc...) asparagine). 2 residues coordinate Ca(2+): aspartate 269 and aspartate 277.

It belongs to the peroxidase family. Classical plant (class III) peroxidase subfamily. Requires heme b as cofactor. The cofactor is Ca(2+).

It is found in the secreted. The enzyme catalyses 2 a phenolic donor + H2O2 = 2 a phenolic radical donor + 2 H2O. In terms of biological role, removal of H(2)O(2), oxidation of toxic reductants, biosynthesis and degradation of lignin, suberization, auxin catabolism, response to environmental stresses such as wounding, pathogen attack and oxidative stress. These functions might be dependent on each isozyme/isoform in each plant tissue. In Arabidopsis thaliana (Mouse-ear cress), this protein is Peroxidase 24 (PER24).